A 341-amino-acid chain; its full sequence is Two-component response regulator ORR30 (341 aa).

Residues 12–127 (RVLVIDDDCS…ELSNIWQHIF (116 aa)) enclose the Response regulatory domain. Asp63 carries the post-translational modification 4-aspartylphosphate. Positions 195 to 254 (DLGKSRLTWTTQLHRQFIAAVNHLGEDKAVPKKILGIMKVKHLTREQVASHLQKYRMQLK) constitute an HTH myb-type domain. Positions 225-250 (PKKILGIMKVKHLTREQVASHLQKYR) form a DNA-binding region, H-T-H motif.

Belongs to the ARR family. Type-B subfamily. In terms of processing, two-component system major event consists of a His-to-Asp phosphorelay between a sensor histidine kinase (HK) and a response regulator (RR). In plants, the His-to-Asp phosphorelay involves an additional intermediate named Histidine-containing phosphotransfer protein (HPt). This multistep phosphorelay consists of a His-Asp-His-Asp sequential transfer of a phosphate group between first a His and an Asp of the HK protein, followed by the transfer to a conserved His of the HPt protein and finally the transfer to an Asp in the receiver domain of the RR protein.

The protein localises to the nucleus. Its function is as follows. Transcriptional activator that acts as a floral inducer to promote short-day (SD) flowering pathway. Activates HD3A and other FT-like genes independently from HD1. May also activate MADS-box transcription factors involved in flowering regulation. Functions as a response regulator involved in His-to-Asp phosphorelay signal transduction system. Phosphorylation of the Asp residue in the receiver domain activates the ability of the protein to promote the transcription of target genes. May directly activate some type-A response regulators in response to cytokinins. This chain is Two-component response regulator ORR30, found in Oryza sativa subsp. japonica (Rice).